Consider the following 191-residue polypeptide: Protein hugin (191 aa).

Residues 1–24 (MCGPSYCTLLLIAASCYILVCSHA) form the signal peptide. A propeptide spanning residues 25-119 (KSLQGTSKLD…LTYYLLLQKL (95 aa)) is cleaved from the precursor. 2 positions are modified to leucine amide: Leu137 and Leu181. A propeptide spanning residues 185–191 (AQVCGGD) is cleaved from the precursor.

The protein belongs to the pyrokinin family. In terms of tissue distribution, expressed in a subgroup of neurosecretory cells in the subesophageal ganglion from embryonic stage 9 to larval stages.

It is found in the secreted. Functionally, probably has a role in larval molting. This Drosophila melanogaster (Fruit fly) protein is Protein hugin (Hug).